The sequence spans 139 residues: Large-conductance mechanosensitive channel (139 aa).

2 consecutive transmembrane segments (helical) span residues 17 to 37 (VVDM…VTSL) and 88 to 108 (TVDF…IMAA).

Belongs to the MscL family. In terms of assembly, homopentamer.

It localises to the cell inner membrane. In terms of biological role, channel that opens in response to stretch forces in the membrane lipid bilayer. May participate in the regulation of osmotic pressure changes within the cell. The polypeptide is Large-conductance mechanosensitive channel (Porphyromonas gingivalis (strain ATCC 33277 / DSM 20709 / CIP 103683 / JCM 12257 / NCTC 11834 / 2561)).